Here is a 150-residue protein sequence, read N- to C-terminus: Peptide deformylase (150 aa).

Residues Cys88 and His130 each contribute to the Fe cation site. Glu131 is a catalytic residue. His134 provides a ligand contact to Fe cation.

This sequence belongs to the polypeptide deformylase family. Fe(2+) is required as a cofactor.

It carries out the reaction N-terminal N-formyl-L-methionyl-[peptide] + H2O = N-terminal L-methionyl-[peptide] + formate. In terms of biological role, removes the formyl group from the N-terminal Met of newly synthesized proteins. Requires at least a dipeptide for an efficient rate of reaction. N-terminal L-methionine is a prerequisite for activity but the enzyme has broad specificity at other positions. This chain is Peptide deformylase, found in Desulfitobacterium hafniense (strain DSM 10664 / DCB-2).